A 408-amino-acid polypeptide reads, in one-letter code: Argininosuccinate synthase (408 aa).

Residues 14 to 22 (AYSGGLDTS) and A41 contribute to the ATP site. 2 residues coordinate L-citrulline: Y92 and S97. G122 is a binding site for ATP. Residues T124, N128, and D129 each coordinate L-aspartate. An L-citrulline-binding site is contributed by N128. R132, S181, S190, E266, and Y278 together coordinate L-citrulline.

The protein belongs to the argininosuccinate synthase family. Type 1 subfamily. As to quaternary structure, homotetramer.

The protein resides in the cytoplasm. The catalysed reaction is L-citrulline + L-aspartate + ATP = 2-(N(omega)-L-arginino)succinate + AMP + diphosphate + H(+). It participates in amino-acid biosynthesis; L-arginine biosynthesis; L-arginine from L-ornithine and carbamoyl phosphate: step 2/3. The chain is Argininosuccinate synthase from Pelobacter propionicus (strain DSM 2379 / NBRC 103807 / OttBd1).